Reading from the N-terminus, the 213-residue chain is MAQETNQTPGPMLCSTGCGFYGNPRTNGMCSVCYKEHLQRQQNSGRMSPMGTASGSNSPTSDSASVQRADTSLNNCEGAAGSTSEKSRNVPVAALPVTQQMTEMSISREDKITTPKTEVSEPVVTQPSPSVSQPSTSQSEEKAPELPKPKKNRCFMCRKKVGLTGFDCRCGNLFCGLHRYSDKHNCPYDYKAEAAAKIRKENPVVVAEKIQRI.

Residues 8 to 42 form an A20-type zinc finger; sequence TPGPMLCSTGCGFYGNPRTNGMCSVCYKEHLQRQQ. 4 residues coordinate Zn(2+): C14, C18, C30, and C33. The interval 39–149 is disordered; that stretch reads QRQQNSGRMS…EEKAPELPKP (111 aa). Positions 40–75 are enriched in polar residues; that stretch reads RQQNSGRMSPMGTASGSNSPTSDSASVQRADTSLNN. Phosphoserine is present on residues S48 and S58. Over residues 120 to 138 the composition is skewed to low complexity; it reads SEPVVTQPSPSVSQPSTSQ. Residues 139-148 show a composition bias toward basic and acidic residues; it reads SEEKAPELPK. An AN1-type zinc finger spans residues 148–194; sequence KPKKNRCFMCRKKVGLTGFDCRCGNLFCGLHRYSDKHNCPYDYKAEA. Residues C154, C157, C168, C170, C175, H178, H184, and C186 each coordinate Zn(2+). K209 carries the post-translational modification N6-acetyllysine.

As to quaternary structure, interacts with ubiquitin and polyubiquitinated proteins. Identified in a heterotrimeric complex with ubiquitin and SQSTM1, where ZFAND5 and SQSTM1 both interact with the same ubiquitin molecule. Homooligomer and/or heterooligomer. Interacts (via A20-type domain) with IKBKG and RIPK1 and with TRAF6 (via AN1-type domain). Highly expressed in skeletal muscle. Expressed in fetal cochlea. Also expressed in infant brain, fetal heart, pancreatic islet, melanocyte, pineal gland, placenta, corneal stroma, and parathyroid tumor. Weakly expressed or undetectable in adult brain, heart, colon, thymus, spleen, kidney, liver, small intestine, placenta, lung and peripheral blood leukocytes. Expressed in rhabdomyosarcoma RD cells (at protein level).

The protein localises to the cytoplasm. Its function is as follows. Involved in protein degradation via the ubiquitin-proteasome system. May act by anchoring ubiquitinated proteins to the proteasome. Plays a role in ubiquitin-mediated protein degradation during muscle atrophy. Plays a role in the regulation of NF-kappa-B activation and apoptosis. Inhibits NF-kappa-B activation triggered by overexpression of RIPK1 and TRAF6 but not of RELA. Also inhibits tumor necrosis factor (TNF), IL-1 and TLR4-induced NF-kappa-B activation in a dose-dependent manner. Overexpression sensitizes cells to TNF-induced apoptosis. Is a potent inhibitory factor for osteoclast differentiation. The protein is AN1-type zinc finger protein 5 (ZFAND5) of Homo sapiens (Human).